The chain runs to 447 residues: 3-phosphoshikimate 1-carboxyvinyltransferase (447 aa).

3 residues coordinate 3-phosphoshikimate: Lys-25, Ser-26, and Arg-30. Lys-25 provides a ligand contact to phosphoenolpyruvate. 2 residues coordinate phosphoenolpyruvate: Gly-96 and Arg-124. The 3-phosphoshikimate site is built by Ser-171, Ser-172, Gln-173, Ser-203, Asp-325, and Lys-352. Residue Gln-173 coordinates phosphoenolpyruvate. The active-site Proton acceptor is the Asp-325. Residues Arg-356, Arg-400, and Lys-425 each coordinate phosphoenolpyruvate.

Belongs to the EPSP synthase family. As to quaternary structure, monomer.

The protein resides in the cytoplasm. It carries out the reaction 3-phosphoshikimate + phosphoenolpyruvate = 5-O-(1-carboxyvinyl)-3-phosphoshikimate + phosphate. Its pathway is metabolic intermediate biosynthesis; chorismate biosynthesis; chorismate from D-erythrose 4-phosphate and phosphoenolpyruvate: step 6/7. Functionally, catalyzes the transfer of the enolpyruvyl moiety of phosphoenolpyruvate (PEP) to the 5-hydroxyl of shikimate-3-phosphate (S3P) to produce enolpyruvyl shikimate-3-phosphate and inorganic phosphate. This is 3-phosphoshikimate 1-carboxyvinyltransferase from Bordetella petrii (strain ATCC BAA-461 / DSM 12804 / CCUG 43448).